A 130-amino-acid chain; its full sequence is Chorion class B protein PC10 (130 aa).

The tract at residues 1–22 (GAWNGRLGCGCGGIAPAAELAA) is left arm. Residues 23–93 (SYGGGLGVAS…GNGALGITAE (71 aa)) form a central domain region. A right arm (Gly-rich tandem repeats) region spans residues 94–130 (RGYGAGIGYEGLGLGYGAGIGYKGYGLGGCGCGCGRL).

Belongs to the chorion protein family.

In terms of biological role, this protein is one of many from the eggshell of the silk moth. In Antheraea polyphemus (Polyphemus moth), this protein is Chorion class B protein PC10.